The primary structure comprises 471 residues: Proline--tRNA ligase (471 aa).

This sequence belongs to the class-II aminoacyl-tRNA synthetase family. ProS type 3 subfamily. Homodimer.

Its subcellular location is the cytoplasm. The enzyme catalyses tRNA(Pro) + L-proline + ATP = L-prolyl-tRNA(Pro) + AMP + diphosphate. Functionally, catalyzes the attachment of proline to tRNA(Pro) in a two-step reaction: proline is first activated by ATP to form Pro-AMP and then transferred to the acceptor end of tRNA(Pro). The polypeptide is Proline--tRNA ligase (Archaeoglobus fulgidus (strain ATCC 49558 / DSM 4304 / JCM 9628 / NBRC 100126 / VC-16)).